We begin with the raw amino-acid sequence, 241 residues long: Small ribosomal subunit protein uS2 (241 aa).

Belongs to the universal ribosomal protein uS2 family.

This chain is Small ribosomal subunit protein uS2, found in Yersinia enterocolitica serotype O:8 / biotype 1B (strain NCTC 13174 / 8081).